Here is a 175-residue protein sequence, read N- to C-terminus: Receptor activity-modifying protein 2 (175 aa).

Residues 1-42 form the signal peptide; that stretch reads MASLRVERAGGPRLPRTRVGRPAALRLLLLLGAVLNPHEALA. The Extracellular segment spans residues 43 to 143; that stretch reads QPLPTTGTPG…VQPTFSDPPE (101 aa). 2 cysteine pairs are disulfide-bonded: cysteine 68–cysteine 99 and cysteine 84–cysteine 131. Asparagine 130 carries an N-linked (GlcNAc...) asparagine glycan. Residues 144-165 form a helical membrane-spanning segment; the sequence is DVLLAMIIAPICLIPFLITLVV. Topologically, residues 166–175 are cytoplasmic; the sequence is WRSKDSEAQA.

The protein belongs to the RAMP family. As to quaternary structure, heterodimer of CALCRL and RAMP2; the interaction forms the receptor complex for adrenomedullin/ADM. Heterodimer of CALCR and RAMP2; interaction forms the AMYR2 receptor complex for calcitonin/CALC and amylin/IAPP. In terms of tissue distribution, strongly expressed in lung, breast, immune system and fetal tissues.

The protein resides in the cell membrane. Functionally, accessory protein that interacts with and modulates the function of G-protein coupled receptors including calcitonin gene-related peptide type 1 receptor (CALCRL) and calcitonin receptor (CALCR). Required for the transport of CALCRL to the plasma membrane. Together with CALCRL, form a receptor complex for adrenomedullin/ADM. Together with CALCR, act as a receptor complex for calcitonin/CT/CALC. Together with CALCR, also act as a receptor complex for amylin/IAPP. In Homo sapiens (Human), this protein is Receptor activity-modifying protein 2.